Consider the following 407-residue polypeptide: MAETLEPSLVGEIDTSAPFESVREAATRFGGFGFWKPSSLNISEASQNEVGMVLKASELEKELIEKEGETLKVLKSLESTKAIVEELKSKIQNKEDKENCDMNVFKELNQAKMNLCKTTKDLAAIRVSVGLLNKRLEEERAALEKTRERLNSENAAEMSMEIQRLSYEAKEFSRTGENVRYAVNKAVAEIEQTRNKIEAAEMRLIAARKMKEAARAAEAVAIAEIKAVTRRGRRRRRGGNGEETMQEEILETIDETAREIRSSRRTLEEGLAKMEAEEGNWWWTEQRRRSSCSAKFKNPPYMMDVKGLNMMMNGDGTSSSVAVLKPTMSIGQILSRKLLLADESAMMMNGRVSLGQILGKTNFGDREKEKRFNGKRKRFGFANLSVMLNKESKKKNKKKKIALNLSC.

3 coiled-coil regions span residues 72–99 (KVLKSLESTKAIVEELKSKIQNKEDKEN), 128–217 (SVGL…ARAA), and 247–278 (EEILETIDETAREIRSSRRTLEEGLAKMEAEE).

The protein belongs to the WEB family.

This Arabidopsis thaliana (Mouse-ear cress) protein is WEB family protein At3g51720.